Here is a 147-residue protein sequence, read N- to C-terminus: MIAVIQRVNRSYVEVDGKVVGEIGKGLNILLGVVKGDTEEDIDKLIKKIPFLRIFEDENGKMNLSVIDIKGEALVISQFTLAGSVKKGRRPSFDNAEEPERAKELYQRFVERLSEYIPVKTGVFAAHMKVFIENDGPVTFIIDSKAL.

Residues 136 to 137 (GP) carry the Gly-cisPro motif, important for rejection of L-amino acids motif.

This sequence belongs to the DTD family. Homodimer.

It is found in the cytoplasm. It carries out the reaction glycyl-tRNA(Ala) + H2O = tRNA(Ala) + glycine + H(+). The enzyme catalyses a D-aminoacyl-tRNA + H2O = a tRNA + a D-alpha-amino acid + H(+). In terms of biological role, an aminoacyl-tRNA editing enzyme that deacylates mischarged D-aminoacyl-tRNAs. Also deacylates mischarged glycyl-tRNA(Ala), protecting cells against glycine mischarging by AlaRS. Acts via tRNA-based rather than protein-based catalysis; rejects L-amino acids rather than detecting D-amino acids in the active site. By recycling D-aminoacyl-tRNA to D-amino acids and free tRNA molecules, this enzyme counteracts the toxicity associated with the formation of D-aminoacyl-tRNA entities in vivo and helps enforce protein L-homochirality. In Persephonella marina (strain DSM 14350 / EX-H1), this protein is D-aminoacyl-tRNA deacylase.